A 305-amino-acid polypeptide reads, in one-letter code: Olfactory receptor 9G1 (305 aa).

Topologically, residues 1 to 24 (MQRSNHTVTEFILLGFTTDPGMQL) are extracellular. Residue N5 is glycosylated (N-linked (GlcNAc...) asparagine). A helical membrane pass occupies residues 25–45 (GLFVVFLGVYSLTVVGNSTLI). Topologically, residues 46-53 (VLICNDSC) are cytoplasmic. A helical transmembrane segment spans residues 54 to 74 (LHTPMYFFTGNLSFLDLWYSS). Residues 75-98 (VYTPKILVTCISEDKSISFAGCLC) lie on the Extracellular side of the membrane. A disulfide bridge links C96 with C188. Residues 99 to 119 (QFFFSAGLAYSECYLLAAVAY) traverse the membrane as a helical segment. Over 120-138 (DRYVAISKPLLYAQAMSIK) the chain is Cytoplasmic. A helical transmembrane segment spans residues 139-159 (LCALLVAVSYCGGFINSSIIT). At 160 to 196 (KKTFSFNFCRENIIDDFFCDLLPLVELACGEKGGYKI) the chain is on the extracellular side. Residues 197–216 (MMYFLLASNVICPAVLILAS) form a helical membrane-spanning segment. At 217 to 236 (YLFIITSVLRISSSKGYLKA) the chain is on the cytoplasmic side. Residues 237 to 257 (FSTCSSHLTSVTLYYGSILYI) form a helical membrane-spanning segment. Topologically, residues 258–270 (YALPRSSYSFDMD) are extracellular. The helical transmembrane segment at 271–291 (KIVSTFYTVVFPMLNLMIYSL) threads the bilayer. The Cytoplasmic segment spans residues 292–305 (RNKDVKEALKKLLP).

The protein belongs to the G-protein coupled receptor 1 family.

It localises to the cell membrane. In terms of biological role, odorant receptor. The sequence is that of Olfactory receptor 9G1 (OR9G1) from Homo sapiens (Human).